The sequence spans 1328 residues: MTVTKTNLNRHLDWFFRESPQKIENVTSPIKTLDFVKVKVSSSDIVVKDSIPHKSKNVFDDFDDGYAIDLTEEHQSSSLNNLKWKDVEGPNILKPIKKIAVPASESEEDFDDVDEEMLRAAEMEVFQSCQPLAVNTADTTVSHSTSSSNVPRSLNKIHDPSRFIKDNDVENRIHVSSASKVASISNTSKPNPIVSENPISATSVSIEIPIKPKELSNNLPFPRLNNNNTNNNNDNNAIEKRDSASPTPSSVSSQISIDFSTWPHQNLLQYLDILRDEKSEISDRIIEVMERYPFSSRFKEWIPKRDILSQKISSVLEVLSNNNNSNNNNGNNGTVPNAKTFFTPPSSITQQVPFPSTIIPESTVKENSTRPYVNSHLVANDKITATPFHSEAVVSPLQSNIRNSDIAEFDEFDIDDADFTFNTTDPINDESGASSDVVVIDDEEDDIENRPLNQALKASKAAVSNASLLQSSSLDRPLLGEMKDKNHKVLMPSLDDPMLSYPWSKEVLGCLKHKFHLKGFRKNQLEAINGTLSGKDVFILMPTGGGKSLCYQLPAVIEGGASRGVTLVISPLLSLMQDQLDHLRKLNIPSLPLSGEQPADERRQVISFLMAKNVLVKLLYVTPEGLASNGAITRVLKSLYERKLLARIVIDEAHCVSHWGHDFRPDYKQLGLLRDRYQGIPFMALTATANEIVKKDIINTLRMENCLELKSSFNRPNLFYEIKPKKDLYTELYRFISNGHLHESGIIYCLSRTSCEQVAAKLRNDYGLKAWHYHAGLEKVERQRIQNEWQSGSYKIIVATIAFGMGVDKGDVRFVIHHSFPKSLEGYYQETGRAGRDGKPAHCIMFYSYKDHVTFQKLIMSGDGDAETKERQRQMLRQVIQFCENKTDCRRKQVLAYFGENFDKVHCRKGCDICCEEATYIKQDMTEFSLQAIKLLKSISGKATLLQLMDIFRGSKSAKIVENGWDRLEGAGVGKLLNRGDSERLFHHLVSEGVFVEKVEANRRGFVSAYVVPGRQTIINSVLAGKRRIILDVKESSSKPDTSSRSLSRSKTLPALREYQLKSTTASVDCSIGTREVDEIYDSQMPPVKPSLIHSRNKIDLEELSGQKFMSEYEIDVMTRCLKDLKLLRSNLMAIDDSRVSSYFTDSVLLSMAKKLPRNVKELKEIHGVSNEKAVNLGPKFLQVIQKFIDEKEQNLEGTELDPSLQSLDTDYPIDTNALSLDHEQGFSDDSDSVYEPSSPIEEGDEEVDGQRKDILNFMNSQSLTQTGSVPKRKSTSYTRPSKSYRHKRGSTSYSRKRKYSTSQKDSRKTSKSANTSFIHPMVKQNYR.

2 stretches are compositionally biased toward low complexity: residues 217–236 and 244–254; these read NNLPFPRLNNNNTNNNNDNN and ASPTPSSVSSQ. Residues 217-254 form a disordered region; the sequence is NNLPFPRLNNNNTNNNNDNNAIEKRDSASPTPSSVSSQ. In terms of domain architecture, Helicase ATP-binding spans 528–707; sequence INGTLSGKDV…INTLRMENCL (180 aa). 555-562 serves as a coordination point for ATP; that stretch reads AVIEGGAS. Residues 651–654 carry the DEAH box motif; sequence DEAH. A Helicase C-terminal domain is found at 728-876; sequence LYTELYRFIS…ETKERQRQML (149 aa). The HRDC domain maps to 1115–1195; it reads IDVMTRCLKD…QKFIDEKEQN (81 aa). 2 disordered regions span residues 1224 to 1247 and 1260 to 1328; these read EQGFSDDSDSVYEPSSPIEEGDEE and NSQS…QNYR. Residues 1260 to 1269 are compositionally biased toward polar residues; sequence NSQSLTQTGS. A compositionally biased stretch (basic residues) spans 1283–1300; the sequence is KSYRHKRGSTSYSRKRKY.

It belongs to the helicase family. RecQ subfamily. As to quaternary structure, interacts with top3.

It localises to the nucleus. The enzyme catalyses Couples ATP hydrolysis with the unwinding of duplex DNA by translocating in the 3'-5' direction.. It carries out the reaction ATP + H2O = ADP + phosphate + H(+). ATP-dependent 3'-5' DNA-helicase. Has a role in the repair of UV-induced DNA damage in G2 via recombination-mediated repair. Also has a role in the repair of infrared-induced double DNA strand breaks. This chain is ATP-dependent DNA helicase hus2/rqh1, found in Schizosaccharomyces pombe (strain 972 / ATCC 24843) (Fission yeast).